A 257-amino-acid chain; its full sequence is Imidazole glycerol phosphate synthase subunit HisF (257 aa).

Residues Asp11 and Asp130 contribute to the active site.

The protein belongs to the HisA/HisF family. Heterodimer of HisH and HisF.

It localises to the cytoplasm. It carries out the reaction 5-[(5-phospho-1-deoxy-D-ribulos-1-ylimino)methylamino]-1-(5-phospho-beta-D-ribosyl)imidazole-4-carboxamide + L-glutamine = D-erythro-1-(imidazol-4-yl)glycerol 3-phosphate + 5-amino-1-(5-phospho-beta-D-ribosyl)imidazole-4-carboxamide + L-glutamate + H(+). It functions in the pathway amino-acid biosynthesis; L-histidine biosynthesis; L-histidine from 5-phospho-alpha-D-ribose 1-diphosphate: step 5/9. Its function is as follows. IGPS catalyzes the conversion of PRFAR and glutamine to IGP, AICAR and glutamate. The HisF subunit catalyzes the cyclization activity that produces IGP and AICAR from PRFAR using the ammonia provided by the HisH subunit. The sequence is that of Imidazole glycerol phosphate synthase subunit HisF from Shewanella frigidimarina (strain NCIMB 400).